A 631-amino-acid polypeptide reads, in one-letter code: MAAQRGMPSSAVRVLEEALGMGLTAAGDARDTADAVAAEGAYYLEQVTITEASEDDYEYEEIPDDNFSIPEGEEDLAKAIQMAQEQATDTEILERKTVLPSKHAVPEVIEDFLCNFLIKMGMTRTLDCFQSEWYELIQKGVTELRTVGNVPDVYTQIMLLENENKNLKKDLKHYKQAADKAREDLLKIQKERDFHRMHHKRIVQEKNKLINDLKGLKLHYASYEPTIRVLHEKHHTLLKEKMLTSLERDKVVGQISGLQETLKKLQRGHSYHGPQIKVDHSREKENAPEGPTQKGLREAREQNKCKTKMKGNTKDSEFPIDMQPNPNLNVSKESLSPAKFDYKLKNIFRLHELPVSCVSMQPHKDILVSCGEDRLWKVLGLPKCNVLLTGFGHTDWLSDCCFHPSGDKLATSSGDTTVKLWDLCKGDCILTFEGHSRAVWSCTWHSCGNFVASSSLDKTSKIWDVNSERCRCTLYGHTDSVNSIEFFPFSNTLLTSSADKTLSIWDARTGICEQSLYGHMHSINDAIFDPRGHMIASCDACGVTKLWDFRKLLPIVSIDIGPSPGNEVNFDSSGRVLAQASGNGVIHLLDLKSGEIHKLMGHENEAHTVVFSHDGEILFSGGSDGTVRTWS.

The stretch at D152–R267 forms a coiled coil. Residues Q266–K332 are disordered. Composition is skewed to basic and acidic residues over residues K277–A287 and G295–K304. 7 WD repeats span residues L350 to T389, G392 to T431, G434 to T473, G476 to S515, G518 to S557, I560 to M600, and G601 to W630.

Interacts with SPAG6 and STK36. Phosphorylated by TSSK2. As to expression, isoform 1 is detected in testis. Isoform 4 is detected in testis and brain, and at lower levels in kidney, heart, pancreas, thyroid, ovary, adrenal gland, spinal cord, trachea and liver.

Its subcellular location is the cytoplasm. The protein resides in the cytoskeleton. The protein localises to the flagellum axoneme. It localises to the cilium axoneme. It is found in the cell projection. Its subcellular location is the cilium. The protein resides in the flagellum. Necessary for sperm flagellar function. Plays a role in motile ciliogenesis. May help to recruit STK36 to the cilium or apical surface of the cell to initiate subsequent steps of construction of the central pair apparatus of motile cilia. This is Sperm-associated antigen 16 protein (SPAG16) from Homo sapiens (Human).